The chain runs to 275 residues: Large ribosomal subunit protein uL2 (275 aa).

Disordered stretches follow at residues 28 to 48 (KPYA…NNGR) and 223 to 275 (VVMN…RNKK).

Belongs to the universal ribosomal protein uL2 family. Part of the 50S ribosomal subunit. Forms a bridge to the 30S subunit in the 70S ribosome.

In terms of biological role, one of the primary rRNA binding proteins. Required for association of the 30S and 50S subunits to form the 70S ribosome, for tRNA binding and peptide bond formation. It has been suggested to have peptidyltransferase activity; this is somewhat controversial. Makes several contacts with the 16S rRNA in the 70S ribosome. This chain is Large ribosomal subunit protein uL2, found in Photobacterium profundum (strain SS9).